The chain runs to 105 residues: Secreted RxLR effector protein 158 (105 aa).

The N-terminal stretch at 1-22 is a signal peptide; that stretch reads MRGAHYVAIVLLVAAGGQTAAG. A RxLR-dEER motif is present at residues 50–71; sequence RALQASRNPKDDLMFSAGDEER.

This sequence belongs to the RxLR effector family.

It is found in the secreted. The protein localises to the host nucleus. The protein resides in the host cytoplasm. Its function is as follows. Secreted effector that partially suppresses the host cell death induced by cell death-inducing proteins. The polypeptide is Secreted RxLR effector protein 158 (Plasmopara viticola (Downy mildew of grapevine)).